The chain runs to 46 residues: Light-harvesting protein B800/850/890 alpha-1 chain (46 aa).

Topologically, residues 1-12 are cytoplasmic; the sequence is MWRLWKLYDPRR. The helical transmembrane segment at 13-33 threads the bilayer; sequence VLIGIFSWLAVLALVIHFILL. His29 contributes to the a bacteriochlorophyll binding site. Residues 34–46 are Periplasmic-facing; that stretch reads STDRFNWVGGAAN.

It belongs to the antenna complex alpha subunit family. As to quaternary structure, the core complex is formed by different alpha and beta chains, binding bacteriochlorophyll molecules, and arranged most probably in tetrameric structures disposed around the reaction center. The non-pigmented gamma chains may constitute additional components.

It localises to the cell inner membrane. Antenna complexes are light-harvesting systems, which transfer the excitation energy to the reaction centers. The sequence is that of Light-harvesting protein B800/850/890 alpha-1 chain from Halorhodospira halophila (strain DSM 244 / SL1) (Ectothiorhodospira halophila (strain DSM 244 / SL1)).